The chain runs to 317 residues: Tyrosine--tRNA ligase (317 aa).

Tyrosine 32 lines the L-tyrosine pocket. The 'HIGH' region signature appears at 37 to 45; it reads PSGEIHLGH. The L-tyrosine site is built by tyrosine 152, glutamine 156, aspartate 159, and glutamine 174. The 'KMSKS' region motif lies at 208–212; the sequence is KMSSS. Position 211 (serine 211) interacts with ATP.

The protein belongs to the class-I aminoacyl-tRNA synthetase family. TyrS type 3 subfamily. In terms of assembly, homodimer.

It is found in the cytoplasm. The catalysed reaction is tRNA(Tyr) + L-tyrosine + ATP = L-tyrosyl-tRNA(Tyr) + AMP + diphosphate + H(+). In terms of biological role, catalyzes the attachment of tyrosine to tRNA(Tyr) in a two-step reaction: tyrosine is first activated by ATP to form Tyr-AMP and then transferred to the acceptor end of tRNA(Tyr). This chain is Tyrosine--tRNA ligase, found in Methanocorpusculum labreanum (strain ATCC 43576 / DSM 4855 / Z).